The sequence spans 163 residues: Nucleotide-binding protein RER_17110 (163 aa).

Belongs to the YajQ family.

Nucleotide-binding protein. This is Nucleotide-binding protein RER_17110 from Rhodococcus erythropolis (strain PR4 / NBRC 100887).